A 464-amino-acid polypeptide reads, in one-letter code: 17,18-epoxy-17-hydroxycur-19-ene N-malonyltransferase (464 aa).

Catalysis depends on proton acceptor residues H191 and D403.

Belongs to the plant acyltransferase family. In terms of assembly, monomer. Mainly expressed in roots.

Its subcellular location is the cytoplasm. It carries out the reaction 17,18-epoxy-17-hydroxycur-19-ene + malonyl-CoA = prestrychnine + CoA. It participates in alkaloid biosynthesis. Its function is as follows. Malonylransferase involved in the biosynthesis of curare monoterpene indole alkaloids (MIAs), natural products such as strychnine, a neurotoxic compound used as a pesticide to control rodents, and its pharmacologically active derivatives, including brucine, used to regulate blood pressure. Curare alkaloids act as animal glycine receptor antagonists. Catalyzes the conversion of 17,18-epoxy-17-hydroxycur-19-ene (Wieland-Gumlich aldehyde) to prestrychnine, which is spontaneously converted into strychnine and isostrychnine. This is 17,18-epoxy-17-hydroxycur-19-ene N-malonyltransferase from Strychnos nux-vomica (Poison nut).